Consider the following 685-residue polypeptide: Glycine--tRNA ligase beta subunit (685 aa).

It belongs to the class-II aminoacyl-tRNA synthetase family. In terms of assembly, tetramer of two alpha and two beta subunits.

It is found in the cytoplasm. The catalysed reaction is tRNA(Gly) + glycine + ATP = glycyl-tRNA(Gly) + AMP + diphosphate. The chain is Glycine--tRNA ligase beta subunit from Leuconostoc mesenteroides subsp. mesenteroides (strain ATCC 8293 / DSM 20343 / BCRC 11652 / CCM 1803 / JCM 6124 / NCDO 523 / NBRC 100496 / NCIMB 8023 / NCTC 12954 / NRRL B-1118 / 37Y).